The primary structure comprises 482 residues: tRNA sulfurtransferase (482 aa).

The region spanning 61–165 (LTIRDALTRI…DDRLLLIKGR (105 aa)) is the THUMP domain. Residues 183-184 (LI), Lys-265, Gly-287, and Gln-296 contribute to the ATP site. Cys-344 and Cys-456 are disulfide-bonded. In terms of domain architecture, Rhodanese spans 404–482 (CGPNDVILDI…GFNNVKVYRP (79 aa)). The active-site Cysteine persulfide intermediate is the Cys-456.

It belongs to the ThiI family.

The protein localises to the cytoplasm. It carries out the reaction [ThiI sulfur-carrier protein]-S-sulfanyl-L-cysteine + a uridine in tRNA + 2 reduced [2Fe-2S]-[ferredoxin] + ATP + H(+) = [ThiI sulfur-carrier protein]-L-cysteine + a 4-thiouridine in tRNA + 2 oxidized [2Fe-2S]-[ferredoxin] + AMP + diphosphate. It catalyses the reaction [ThiS sulfur-carrier protein]-C-terminal Gly-Gly-AMP + S-sulfanyl-L-cysteinyl-[cysteine desulfurase] + AH2 = [ThiS sulfur-carrier protein]-C-terminal-Gly-aminoethanethioate + L-cysteinyl-[cysteine desulfurase] + A + AMP + 2 H(+). It participates in cofactor biosynthesis; thiamine diphosphate biosynthesis. Its function is as follows. Catalyzes the ATP-dependent transfer of a sulfur to tRNA to produce 4-thiouridine in position 8 of tRNAs, which functions as a near-UV photosensor. Also catalyzes the transfer of sulfur to the sulfur carrier protein ThiS, forming ThiS-thiocarboxylate. This is a step in the synthesis of thiazole, in the thiamine biosynthesis pathway. The sulfur is donated as persulfide by IscS. The protein is tRNA sulfurtransferase of Shigella dysenteriae serotype 1 (strain Sd197).